The chain runs to 452 residues: MAAATLLRATPRFSGLCASPTPFLQGRLRPLKAPASPFLCRGLAVEAKKTYVRDKPHVNVGTIGHVDHGKTTLTAAITKILAEGGGAKFKKYEEIDNAPEERARGITINAAHVEYSTAARHYAHTDCPGHADYVKNMITGTAPLDGCILVVAANDGPMPQTREHLLLAKQIGVEHVVVYVNKADAVQDSEMVELVELEIRELLTEFGYKGEETPVIVGSALCALEQRDPELGVKSVQKLLDAVDTYIPVPTRDLDKPFLLPVESVYSIPGRGTVVTGTLERGILKKGDECELLGHNKNIRTVVTGIEMFHKSLERAEAGDNLGALVRGLKREDLRRGLVMVKPGSIQPHQKVEAQVYILSKEEGGRHKPFVSHFMPVMFSLTWDMACRVILPPGKELAMPGEDLKLSLILRQPMILEKGQRFTLRDGNKTIGTGLVTDVPAMTEEDKNIKWS.

The transit peptide at 1 to 43 directs the protein to the mitochondrion; sequence MAAATLLRATPRFSGLCASPTPFLQGRLRPLKAPASPFLCRGL. Positions 55 to 251 constitute a tr-type G domain; sequence KPHVNVGTIG…AVDTYIPVPT (197 aa). The G1 stretch occupies residues 64–71; that stretch reads GHVDHGKT. Residues Asp-67, Gly-69, Lys-70, Thr-71, and Thr-72 each coordinate GTP. A Mg(2+)-binding site is contributed by Thr-71. At Lys-79 the chain carries N6-acetyllysine. Residue Lys-88 is modified to N6-acetyllysine; alternate. At Lys-88 the chain carries N6-succinyllysine; alternate. Positions 105–109 are G2; that stretch reads GITIN. The segment at 126–129 is G3; it reads DCPG. Residues Asn-181, Asp-184, Ser-219, Ala-220, and Leu-221 each coordinate GTP. Residues 181–184 form a G4 region; it reads NKAD. Residues 219 to 221 form a G5 region; it reads SAL. Residue Lys-234 is modified to N6-succinyllysine. Residue Lys-256 is modified to N6-acetyllysine. Thr-278 carries the post-translational modification Phosphothreonine. Position 286 is an N6-succinyllysine (Lys-286). Ser-312 is subject to Phosphoserine. An N6-acetyllysine mark is found at Lys-361 and Lys-418.

This sequence belongs to the TRAFAC class translation factor GTPase superfamily. Classic translation factor GTPase family. EF-Tu/EF-1A subfamily. As to quaternary structure, interacts with NLRX1. Interacts with ATG16L1.

It localises to the mitochondrion. It catalyses the reaction GTP + H2O = GDP + phosphate + H(+). Its function is as follows. GTP hydrolase that promotes the GTP-dependent binding of aminoacyl-tRNA to the A-site of ribosomes during protein biosynthesis. Also plays a role in the regulation of autophagy and innate immunity. Recruits ATG5-ATG12 and NLRX1 at mitochondria and serves as a checkpoint of the RIGI-MAVS pathway. In turn, inhibits RLR-mediated type I interferon while promoting autophagy. The sequence is that of Elongation factor Tu, mitochondrial (Tufm) from Mus musculus (Mouse).